Consider the following 314-residue polypeptide: Malate dehydrogenase (314 aa).

NAD(+)-binding positions include 11 to 16 and Asp-35; that span reads GSGNIG. Substrate-binding residues include Arg-84 and Arg-90. NAD(+)-binding positions include Asn-97 and 120–122; that span reads ITN. The substrate site is built by Asn-122 and Arg-153. His-177 acts as the Proton acceptor in catalysis.

It belongs to the LDH/MDH superfamily. MDH type 3 family.

The enzyme catalyses (S)-malate + NAD(+) = oxaloacetate + NADH + H(+). Functionally, catalyzes the reversible oxidation of malate to oxaloacetate. This is Malate dehydrogenase from Rickettsia prowazekii (strain Madrid E).